The sequence spans 164 residues: HTH-type transcriptional regulator IscR (164 aa).

In terms of domain architecture, HTH rrf2-type spans 2-131 (RLTSKGRYAV…NNITLAELVN (130 aa)). A DNA-binding region (H-T-H motif) is located at residues 28–51 (LADISERQGISLSYLEQLFSRLRK). 3 residues coordinate [2Fe-2S] cluster: cysteine 92, cysteine 98, and cysteine 104. A disordered region spans residues 143-164 (NNDTRRTANGRPQETINVNLRA). Residues 152–164 (GRPQETINVNLRA) are compositionally biased toward polar residues.

The cofactor is [2Fe-2S] cluster.

In terms of biological role, regulates the transcription of several operons and genes involved in the biogenesis of Fe-S clusters and Fe-S-containing proteins. The sequence is that of HTH-type transcriptional regulator IscR from Yersinia enterocolitica serotype O:8 / biotype 1B (strain NCTC 13174 / 8081).